The primary structure comprises 638 residues: Threonine--tRNA ligase (638 aa).

The 61-residue stretch at 1 to 61 (MPIITLPDGS…NSDSKVVIIT (61 aa)) folds into the TGS domain. The catalytic stretch occupies residues 242–533 (DHRKLGKKHS…LIEQYEAKFP (292 aa)). Zn(2+) is bound by residues Cys333, His384, and His510.

Belongs to the class-II aminoacyl-tRNA synthetase family. Homodimer. The cofactor is Zn(2+).

It localises to the cytoplasm. It catalyses the reaction tRNA(Thr) + L-threonine + ATP = L-threonyl-tRNA(Thr) + AMP + diphosphate + H(+). Functionally, catalyzes the attachment of threonine to tRNA(Thr) in a two-step reaction: L-threonine is first activated by ATP to form Thr-AMP and then transferred to the acceptor end of tRNA(Thr). Also edits incorrectly charged L-seryl-tRNA(Thr). This is Threonine--tRNA ligase from Prochlorococcus marinus (strain MIT 9215).